The primary structure comprises 142 residues: ATP synthase epsilon chain (142 aa).

The protein belongs to the ATPase epsilon chain family. F-type ATPases have 2 components, CF(1) - the catalytic core - and CF(0) - the membrane proton channel. CF(1) has five subunits: alpha(3), beta(3), gamma(1), delta(1), epsilon(1). CF(0) has three main subunits: a, b and c.

The protein resides in the cell inner membrane. Its function is as follows. Produces ATP from ADP in the presence of a proton gradient across the membrane. The sequence is that of ATP synthase epsilon chain from Histophilus somni (strain 129Pt) (Haemophilus somnus).